Consider the following 404-residue polypeptide: Putative replication protein C (404 aa).

Positions 249-287 (PDQIERHKQNSHPESTNEFEPSSREEQGERPSPAIEPQR) are disordered.

It to A.rhizogenes possible replication protein C (RepC).

This Sinorhizobium fredii (strain NBRC 101917 / NGR234) protein is Putative replication protein C.